The chain runs to 331 residues: Undecaprenyl-phosphate 4-deoxy-4-formamido-L-arabinose transferase (331 aa).

A run of 2 helical transmembrane segments spans residues 236 to 256 (LSIV…FLIL) and 270 to 290 (VFPL…GLGL).

The protein belongs to the glycosyltransferase 2 family.

The protein localises to the cell inner membrane. The enzyme catalyses UDP-4-deoxy-4-formamido-beta-L-arabinose + di-trans,octa-cis-undecaprenyl phosphate = 4-deoxy-4-formamido-alpha-L-arabinopyranosyl di-trans,octa-cis-undecaprenyl phosphate + UDP. The protein operates within glycolipid biosynthesis; 4-amino-4-deoxy-alpha-L-arabinose undecaprenyl phosphate biosynthesis; 4-amino-4-deoxy-alpha-L-arabinose undecaprenyl phosphate from UDP-4-deoxy-4-formamido-beta-L-arabinose and undecaprenyl phosphate: step 1/2. It functions in the pathway bacterial outer membrane biogenesis; lipopolysaccharide biosynthesis. Its function is as follows. Catalyzes the transfer of 4-deoxy-4-formamido-L-arabinose from UDP to undecaprenyl phosphate. The modified arabinose is attached to lipid A and is required for resistance to polymyxin and cationic antimicrobial peptides. The polypeptide is Undecaprenyl-phosphate 4-deoxy-4-formamido-L-arabinose transferase (Shewanella sediminis (strain HAW-EB3)).